The chain runs to 253 residues: Sporulation initiation inhibitor protein Soj (253 aa).

10 residues coordinate ATP: K11, G12, G13, V14, G15, K16, T17, T18, P214, and N216. T17 is a Mg(2+) binding site.

It belongs to the ParA family. As to quaternary structure, dimerizes in the presence of ATP but not ADP; ATP-binding is required for double-stranded (ds)DNA-binding. Interacts with DnaA.

It is found in the cytoplasm. It catalyses the reaction ATP + H2O = ADP + phosphate + H(+). In terms of biological role, acts as a spatially regulated molecular switch, capable of either inhibiting or activating the ability of DnaA to initiate DNA replication. Monomeric ADP-Soj inhibits oligomerization of DnaA on single-stranded (ss)- or double-stranded (ds)DNA, thus inhibiting DNA replication initiation; does not disassemble premade DnaA-DNA filaments. Decreases the residence time of DnaA on the chromosome at its binding sites (oriC, replication forks and (probably) promoter-binding sites). Soj forms nucleoprotein filaments in an ATP- and DNA-dependent manner. Inhibits the initiation of sporulation, Spo0J antagonizes this inhibition. Soj ultimately inhibits the activation (phosphorylation) of Spo0A. In Bacillus subtilis (strain 168), this protein is Sporulation initiation inhibitor protein Soj.